Consider the following 149-residue polypeptide: Large ribosomal subunit protein uL13 (149 aa).

This sequence belongs to the universal ribosomal protein uL13 family. In terms of assembly, part of the 50S ribosomal subunit.

In terms of biological role, this protein is one of the early assembly proteins of the 50S ribosomal subunit, although it is not seen to bind rRNA by itself. It is important during the early stages of 50S assembly. The chain is Large ribosomal subunit protein uL13 from Borrelia turicatae (strain 91E135).